The sequence spans 331 residues: ABSCISIC ACID-INSENSITIVE 5-like protein 1 (331 aa).

Phosphoserine is present on residues S40 and S98. A Phosphothreonine modification is found at T143. Residues 247–310 (MERRQRRMIK…RQEIISRSKQ (64 aa)) enclose the bZIP domain. The basic motif stretch occupies residues 249–268 (RRQRRMIKNRESAARSRARR). The segment at 275–289 (LELELNNLTEENTKL) is leucine-zipper. The segment covering 296–320 (NEKKRRQEIISRSKQVTKEKSGDKL) has biased composition (basic and acidic residues). Residues 296-331 (NEKKRRQEIISRSKQVTKEKSGDKLRKIRRMASAGW) are disordered.

The protein belongs to the bZIP family. ABI5 subfamily. As to quaternary structure, DNA-binding heterodimer with AREB3/DPBF3 or EEL/DPBF4. Interacts with the AFP proteins AFP1, AFP2 and AFP3. As to expression, predominantly expressed in seeds.

The protein localises to the nucleus. In terms of biological role, could participate in abscisic acid-regulated gene expression during seed development. In Arabidopsis thaliana (Mouse-ear cress), this protein is ABSCISIC ACID-INSENSITIVE 5-like protein 1 (DPBF2).